The sequence spans 259 residues: MVTMKDLLECGVHFGHQTRRWNPKMKKYIFGVRKNIYIIDLQKTLRYFRNTYTIVMDAAAEGKTVLFVGTKKQARASVRDAAIACGMPYVDNRWLGGMLTNFPTIQKSIRKLDVISEMQENGQIDLLTKKEALMLSRQKEKLESYFGGIRNMKKLPDMLFVMDAVKEHIAVLEARCLGIPVVAPLDTNCDPDLITYPIPGNDDAIRSIQLFCREMTEAINEGKALRSGGRDEIVAEDSEEVSTVDADAITAEDFETEEV.

Residues 234–259 (VAEDSEEVSTVDADAITAEDFETEEV) are disordered. Residues 250–259 (TAEDFETEEV) are compositionally biased toward acidic residues.

It belongs to the universal ribosomal protein uS2 family.

The protein is Small ribosomal subunit protein uS2 of Sulfurimonas denitrificans (strain ATCC 33889 / DSM 1251) (Thiomicrospira denitrificans (strain ATCC 33889 / DSM 1251)).